The primary structure comprises 418 residues: Glutamyl-tRNA reductase (418 aa).

Substrate-binding positions include Thr49–Arg52, Ser107, Glu112–Gln114, and Gln118. Residue Cys50 is the Nucleophile of the active site. Gly187–Ile192 lines the NADP(+) pocket.

Belongs to the glutamyl-tRNA reductase family. Homodimer.

The catalysed reaction is (S)-4-amino-5-oxopentanoate + tRNA(Glu) + NADP(+) = L-glutamyl-tRNA(Glu) + NADPH + H(+). It participates in porphyrin-containing compound metabolism; protoporphyrin-IX biosynthesis; 5-aminolevulinate from L-glutamyl-tRNA(Glu): step 1/2. Functionally, catalyzes the NADPH-dependent reduction of glutamyl-tRNA(Glu) to glutamate 1-semialdehyde (GSA). The chain is Glutamyl-tRNA reductase from Vibrio parahaemolyticus serotype O3:K6 (strain RIMD 2210633).